We begin with the raw amino-acid sequence, 461 residues long: MANQRKPILPLLLEKKPVELVKPSKHTHCETLSLSTLDNDPFNEVMYATIYVFKANGKNLDDPVSLLRKALSELLVHYYPLSGKLMRSESNGKLQLVYLGEGVPFEVATSTLDLSSLNYIENLDDQVALRLVPEIEIDYESNVCYHPLALQVTKFACGGFTIGTALTHAVCDGYGVAQIIHALTELAAGKTEPSVKSVWQRERLVGKIDNKPGKVPGSHIDGFLATSAYLPTTDVVTETINIRAGDIKRLKDSMMKECEYLKESFTTYEVLSSYIWKLRSRALKLNPDGITVLGVAVGIRHVLDPPLPKGYYGNAYIDVYVELTVRELEESSISNIANRVKKAKKTAYEKGYIEEELKNTERLMRDDSMFEGVSDGLFFLTDWRNIGWFGSMDFGWNEPVNLRPLTQRESTVHVGMILKPSKSDPSMEGGVKVIMKLPRDAMVEFKREMATMKKLYFGDTN.

Active-site proton acceptor residues include histidine 168 and aspartate 393.

It belongs to the plant acyltransferase family. As to quaternary structure, monomer. In terms of tissue distribution, mainly expressed in roots at low levels, specifically, in the root tip.

It carries out the reaction 2 (E)-4-coumaroyl-CoA + spermidine = N(1),N(8)-bis(coumaroyl)-spermidine + 2 CoA + 2 H(+). The protein operates within amine and polyamine metabolism; spermidine metabolism. Spermidine coumaroyl-CoA acyltransferase that mediates the conversion of spermidine into dicoumaroyl-spermidine. The protein is Spermidine coumaroyl-CoA acyltransferase of Arabidopsis thaliana (Mouse-ear cress).